Reading from the N-terminus, the 146-residue chain is MKLHELKPAPGARTKPTRRGQGIGSGMGKTAGRGHKGQKARSGGGVRPGFEGGQMPLQRRMPKRGFTNRFKKEIIAVNIEKLNRFENGTTVTPEALLAARVIKKTGDGVKILGNGNLEKSLTVQAHAFSSTARQKIEAAGGRAEVI.

The interval Met1 to Phe66 is disordered. Composition is skewed to gly residues over residues Gln21 to Ala31 and Ser42 to Gly52.

It belongs to the universal ribosomal protein uL15 family. In terms of assembly, part of the 50S ribosomal subunit.

Functionally, binds to the 23S rRNA. This Pelotomaculum thermopropionicum (strain DSM 13744 / JCM 10971 / SI) protein is Large ribosomal subunit protein uL15.